We begin with the raw amino-acid sequence, 240 residues long: Phosducin-like protein 3 (240 aa).

Met-1 is modified (N-acetylmethionine). Positions Lys-27 to Gly-181 constitute a Phosducin domain. Residues Ser-44, Ser-65, Ser-235, and Ser-237 each carry the phosphoserine modification. Positions Phe-92–Asp-240 are thioredoxin fold.

It belongs to the phosducin family. Interacts (via thioredoxin fold region) with KDR/VEGFR2 (via juxtamembrane domain). Forms ternary complexes with the chaperonin CCT complex and actin substrate, leading to inhibition of actin folding. Interacts with XIAP (via BIR 3 and RING domain). Interacts with HSP90AA1 and HSP90AB1. Post-translationally, N-terminal methionine acetylation destabilizes the protein. As to expression, expressed in blood vessels (at protein level).

The protein resides in the cytoplasm. It is found in the perinuclear region. Its subcellular location is the endoplasmic reticulum. Functionally, acts as a chaperone for the angiogenic VEGF receptor KDR/VEGFR2, increasing its abundance by inhibiting its ubiquitination and degradation. Inhibits the folding activity of the chaperonin-containing T-complex (CCT) which leads to inhibition of cytoskeletal actin folding. Acts as a chaperone during heat shock alongside HSP90 and HSP40/70 chaperone complexes. Modulates the activation of caspases during apoptosis. The polypeptide is Phosducin-like protein 3 (Pdcl3) (Mus musculus (Mouse)).